Here is a 399-residue protein sequence, read N- to C-terminus: S-adenosylmethionine synthase (399 aa).

His17 lines the ATP pocket. Asp19 contacts Mg(2+). Glu45 contacts K(+). Positions 58 and 101 each coordinate L-methionine. Residues 101–111 (QSADIAMGVDQ) form a flexible loop region. Residues 177 to 179 (DGK), 244 to 245 (RF), Asp253, 259 to 260 (RK), Ala276, and Lys280 each bind ATP. Asp253 is an L-methionine binding site. Position 284 (Lys284) interacts with L-methionine.

Belongs to the AdoMet synthase family. As to quaternary structure, homotetramer; dimer of dimers. The cofactor is Mg(2+). K(+) is required as a cofactor.

It localises to the cytoplasm. It catalyses the reaction L-methionine + ATP + H2O = S-adenosyl-L-methionine + phosphate + diphosphate. Its pathway is amino-acid biosynthesis; S-adenosyl-L-methionine biosynthesis; S-adenosyl-L-methionine from L-methionine: step 1/1. Catalyzes the formation of S-adenosylmethionine (AdoMet) from methionine and ATP. The overall synthetic reaction is composed of two sequential steps, AdoMet formation and the subsequent tripolyphosphate hydrolysis which occurs prior to release of AdoMet from the enzyme. This Bacillus mycoides (strain KBAB4) (Bacillus weihenstephanensis) protein is S-adenosylmethionine synthase.